A 228-amino-acid chain; its full sequence is Cytochrome b5 domain-containing protein 1 (228 aa).

The Cytochrome b5 heme-binding domain maps to 17–83; it reads RRYFTPAEVA…DPKTRDIRKH (67 aa). Residues Tyr52 and His83 each contribute to the heme site.

The protein belongs to the cytochrome b5 family.

It localises to the cytoplasm. The protein resides in the cytoskeleton. Its subcellular location is the cilium axoneme. Radial spoke stalk protein that binds heme under oxidizing conditions. Required for the coordinated beating of multiple cilia maybe by functioning in a redox signaling pathway. This is Cytochrome b5 domain-containing protein 1 from Homo sapiens (Human).